Reading from the N-terminus, the 619-residue chain is Phosphoenolpyruvate carboxykinase [GTP] (619 aa).

Substrate contacts are provided by residues R81 and 230–232 (YGG). Positions 239 and 259 each coordinate Mn(2+). S281 lines the substrate pocket. 282–287 (ACGKTN) is a binding site for GTP. Residue C283 is part of the active site. D306 contributes to the Mn(2+) binding site. 399–401 (NSR) serves as a coordination point for substrate. GTP is bound by residues R401, R432, and 525–528 (YGQN).

Belongs to the phosphoenolpyruvate carboxykinase [GTP] family. Monomer. Mn(2+) is required as a cofactor.

The enzyme catalyses oxaloacetate + GTP = phosphoenolpyruvate + GDP + CO2. In terms of biological role, in parasitic nematodes PEPCK carboxylates phosphoenolpyruvate to oxaloacetate thus introducing the products of glycolysis to mitochondrial metabolism. Catalyzes the conversion of oxaloacetate (OAA) to phosphoenolpyruvate (PEP), the rate-limiting step in the metabolic pathway that produces glucose from lactate and other precursors derived from the citric acid cycle. The sequence is that of Phosphoenolpyruvate carboxykinase [GTP] (PEPCK) from Haemonchus contortus (Barber pole worm).